The following is a 153-amino-acid chain: D-aminoacyl-tRNA deacylase (153 aa).

The Gly-cisPro motif, important for rejection of L-amino acids motif lies at 137-138; that stretch reads GP.

The protein belongs to the DTD family. As to quaternary structure, homodimer.

The protein resides in the cytoplasm. It catalyses the reaction glycyl-tRNA(Ala) + H2O = tRNA(Ala) + glycine + H(+). The enzyme catalyses a D-aminoacyl-tRNA + H2O = a tRNA + a D-alpha-amino acid + H(+). Its function is as follows. An aminoacyl-tRNA editing enzyme that deacylates mischarged D-aminoacyl-tRNAs. Also deacylates mischarged glycyl-tRNA(Ala), protecting cells against glycine mischarging by AlaRS. Acts via tRNA-based rather than protein-based catalysis; rejects L-amino acids rather than detecting D-amino acids in the active site. By recycling D-aminoacyl-tRNA to D-amino acids and free tRNA molecules, this enzyme counteracts the toxicity associated with the formation of D-aminoacyl-tRNA entities in vivo and helps enforce protein L-homochirality. This chain is D-aminoacyl-tRNA deacylase, found in Herpetosiphon aurantiacus (strain ATCC 23779 / DSM 785 / 114-95).